Consider the following 334-residue polypeptide: Large ribosomal subunit protein uL3 (334 aa).

The span at 1 to 10 (MGMKKNRPRR) shows a compositional bias: basic residues. The segment at 1 to 21 (MGMKKNRPRRGSLAFSPRKRA) is disordered.

The protein belongs to the universal ribosomal protein uL3 family. Part of the 50S ribosomal subunit. Forms a cluster with proteins L14 and L24e.

One of the primary rRNA binding proteins, it binds directly near the 3'-end of the 23S rRNA, where it nucleates assembly of the 50S subunit. The sequence is that of Large ribosomal subunit protein uL3 from Methanococcus vannielii (strain ATCC 35089 / DSM 1224 / JCM 13029 / OCM 148 / SB).